Here is a 209-residue protein sequence, read N- to C-terminus: Ribosomal RNA large subunit methyltransferase E (209 aa).

Residues Gly-63, Trp-65, Asp-83, Asp-99, and Asp-124 each coordinate S-adenosyl-L-methionine. The Proton acceptor role is filled by Lys-164.

The protein belongs to the class I-like SAM-binding methyltransferase superfamily. RNA methyltransferase RlmE family.

It is found in the cytoplasm. The enzyme catalyses uridine(2552) in 23S rRNA + S-adenosyl-L-methionine = 2'-O-methyluridine(2552) in 23S rRNA + S-adenosyl-L-homocysteine + H(+). In terms of biological role, specifically methylates the uridine in position 2552 of 23S rRNA at the 2'-O position of the ribose in the fully assembled 50S ribosomal subunit. The protein is Ribosomal RNA large subunit methyltransferase E of Shewanella woodyi (strain ATCC 51908 / MS32).